The sequence spans 294 residues: Agamous-like MADS-box protein AGL82 (294 aa).

Positions 1–51 (MVPKVVDLQRIANDKTRITTYKKRKASLYKKAQEFSTLCGVETCLIVYGPT) constitute an MADS-box domain.

Interacts with MEE14/CBP1.

The protein resides in the nucleus. Functionally, probable transcription factor that may function in the maintenance of the proper function of the central cell in pollen tube attraction. The protein is Agamous-like MADS-box protein AGL82 of Arabidopsis thaliana (Mouse-ear cress).